Consider the following 405-residue polypeptide: Endo-1,4-beta-xylanase 5 (405 aa).

The signal sequence occupies residues 1 to 22 (MTRLATLITLAGLLAVSPGAYA). Residues asparagine 27 and asparagine 69 are each glycosylated (N-linked (GlcNAc...) asparagine). Residues 32-352 (STGAEGLNSL…KPAYTSVSSL (321 aa)) enclose the GH10 domain. The active-site Proton donor is the glutamate 166. Residue asparagine 171 is glycosylated (N-linked (GlcNAc...) asparagine). The active-site Nucleophile is glutamate 273. An intrachain disulfide couples cysteine 302 to cysteine 308. Residue glycine 380 is the site of GPI-anchor amidated glycine attachment. Residues 381–405 (AGRETVSIAGLTLALSSLAFGMFML) constitute a propeptide, removed in mature form.

The protein belongs to the glycosyl hydrolase 10 (cellulase F) family.

Its subcellular location is the cell membrane. It localises to the secreted. It carries out the reaction Endohydrolysis of (1-&gt;4)-beta-D-xylosidic linkages in xylans.. The protein operates within glycan degradation; xylan degradation. Its function is as follows. Endo-1,4-beta-xylanase involved in the hydrolysis of xylan, a major structural heterogeneous polysaccharide found in plant biomass representing the second most abundant polysaccharide in the biosphere, after cellulose. The sequence is that of Endo-1,4-beta-xylanase 5 (XYL5) from Pyricularia grisea (Crabgrass-specific blast fungus).